A 375-amino-acid polypeptide reads, in one-letter code: MVDNSKTRVVVGMSGGVDSSVSALLLKQQGYDVVGVFMKNWDDTDDSGVCTATEDYEDVKKVADKIGIPYYSINFEKEYWHRVFEYFLNEYKKGRTPNPDVMCNSQIKFKSFLDFAMDLDADYIAMGHYAKTVKDADGLTHMMRPKDGNKDQTYFLSQLNQDQIKKVIFPLANLTKPQVREIALANGLATAKKKDSTGICFIGERNFRKFLSEFLPAKSGKMVTPDGKVVGEHAGLMYYTIGQRQGLGLGSTKESTDPWFVVGKDLKKNELIVEQGYDSKLLYASRLKASDMSFFTGKPDHDVEFHCSAKFRYRQCDVGVTVKYHADDNTADVYFDEPARAVTPGQALVLYQGEECLGGGNIDAAYQEDKQLQLV.

ATP-binding positions include Gly12 to Ser19 and Met38. The interval Asn98–Asp100 is interaction with target base in tRNA. Catalysis depends on Cys103, which acts as the Nucleophile. A disulfide bridge links Cys103 with Cys200. An ATP-binding site is contributed by Gly127. The interaction with tRNA stretch occupies residues Lys150–Gln152. Catalysis depends on Cys200, which acts as the Cysteine persulfide intermediate. The interaction with tRNA stretch occupies residues Arg312–Tyr313.

The protein belongs to the MnmA/TRMU family.

Its subcellular location is the cytoplasm. The catalysed reaction is S-sulfanyl-L-cysteinyl-[protein] + uridine(34) in tRNA + AH2 + ATP = 2-thiouridine(34) in tRNA + L-cysteinyl-[protein] + A + AMP + diphosphate + H(+). Functionally, catalyzes the 2-thiolation of uridine at the wobble position (U34) of tRNA, leading to the formation of s(2)U34. This is tRNA-specific 2-thiouridylase MnmA from Lactobacillus helveticus (strain DPC 4571).